The following is a 371-amino-acid chain: Collectin-46 (371 aa).

The signal sequence occupies residues 1-20 (MLLLPLSVLLLLTQPWRSLG). The tract at residues 43–215 (PEGGLPGRDG…ERGAKGESGL (173 aa)) is disordered. The Collagen-like domain maps to 46 to 216 (GLPGRDGQDG…RGAKGESGLA (171 aa)). The segment covering 51-65 (DGQDGREGPQGEKGD) has biased composition (basic and acidic residues). N-linked (GlcNAc...) asparagine glycosylation occurs at N90. Positions 113–128 (PAGREGPSGKQGSMGP) are enriched in low complexity. A compositionally biased stretch (gly residues) spans 139-148 (GPKGGMGAPG). The span at 170-191 (APGSAGVAGPAGAIGPQGPSGA) shows a compositional bias: low complexity. A compositionally biased stretch (basic and acidic residues) spans 198–210 (KGDRGDPGERGAK). Positions 201–203 (RGD) match the Cell attachment site motif. The C-type lectin domain occupies 273–371 (QLCREAKGQL…SEPLLVICEF (99 aa)). 2 cysteine pairs are disulfide-bonded: C275–C369 and C347–C361.

This sequence belongs to the SFTPD family. In terms of assembly, oligomeric complex of 4 set of homotrimers. Hydroxylated. As to expression, highly expressed in thymus and liver.

It is found in the secreted. This chain is Collectin-46 (CL46), found in Bos taurus (Bovine).